A 201-amino-acid chain; its full sequence is Potassium-transporting ATPase KdpC subunit (201 aa).

The chain crosses the membrane as a helical span at residues 13 to 33; the sequence is IIFMIFTILCGGIYTIFITGI.

Belongs to the KdpC family. The system is composed of three essential subunits: KdpA, KdpB and KdpC.

Its subcellular location is the cell membrane. In terms of biological role, part of the high-affinity ATP-driven potassium transport (or Kdp) system, which catalyzes the hydrolysis of ATP coupled with the electrogenic transport of potassium into the cytoplasm. This subunit acts as a catalytic chaperone that increases the ATP-binding affinity of the ATP-hydrolyzing subunit KdpB by the formation of a transient KdpB/KdpC/ATP ternary complex. In Clostridium botulinum (strain Eklund 17B / Type B), this protein is Potassium-transporting ATPase KdpC subunit.